Reading from the N-terminus, the 211-residue chain is RNA chaperone ProQ (211 aa).

The segment at R113–F147 is disordered.

This sequence belongs to the ProQ family.

It is found in the cytoplasm. In terms of biological role, RNA chaperone with significant RNA binding, RNA strand exchange and RNA duplexing activities. This is RNA chaperone ProQ from Histophilus somni (strain 129Pt) (Haemophilus somnus).